The chain runs to 248 residues: mRNA-decapping protein OPG122 (248 aa).

One can recognise a Nudix hydrolase domain in the interval 45–227 (HKRVSVSAIL…IAKYALDTAK (183 aa)). Positions 125-147 (GGILKRGENVPECLSREIKEEVN) match the Nudix box motif. Mg(2+) is bound at residue Glu-132. Glu-141 serves as the catalytic Nucleophile. Glu-145 contacts Mn(2+). Position 167 (Asp-167) interacts with Mg(2+).

It belongs to the Nudix hydrolase family. Mg(2+) is required as a cofactor. Mn(2+) serves as cofactor.

It is found in the host mitochondrion. In terms of biological role, decapping enzyme that remove the protective 5'-cap from both host and viral mRNAs to commit transcripts for decay by the cellular exonuclease XRN1. Preferentially targets spliced mRNAs and since all viral genes are intronless, it preferentially targets host over viral transcripts. Acceleration of the turnover of cellular transcripts promotes the shutoff of host protein synthesis and therefore diminish the magnitude of antiviral response. The protein is mRNA-decapping protein OPG122 (OPG122) of Variola virus (isolate Human/India/Ind3/1967) (VARV).